The following is a 360-amino-acid chain: uncharacterized protein (360 aa).

A compositionally biased stretch (acidic residues) spans 22–32 (EEDVEPNEEAE). The disordered stretch occupies residues 22–55 (EEDVEPNEEAEGPGGVHKKRRGARKKNRRQRMEG). Residues 37-50 (VHKKRRGARKKNRR) are compositionally biased toward basic residues.

This is an uncharacterized protein from Caenorhabditis elegans.